Here is an 81-residue protein sequence, read N- to C-terminus: Three-finger toxin MALT0057C (81 aa).

Residues 1 to 21 (MKTLLLTLVVVTIVCLDFGHT) form the signal peptide. 4 disulfides stabilise this stretch: cysteine 24/cysteine 43, cysteine 38/cysteine 60, cysteine 62/cysteine 73, and cysteine 74/cysteine 79.

This sequence belongs to the three-finger toxin family. Short-chain subfamily. Type I alpha-neurotoxin sub-subfamily. As to expression, expressed by the venom gland.

It is found in the secreted. Binds to muscle nicotinic acetylcholine receptor (nAChR) and inhibit acetylcholine from binding to the receptor, thereby impairing neuromuscular transmission. In Micrurus altirostris (Uruguayan coral snake), this protein is Three-finger toxin MALT0057C.